A 392-amino-acid chain; its full sequence is O-phospho-L-seryl-tRNA:Cys-tRNA synthase 2 (392 aa).

Pyridoxal 5'-phosphate is bound by residues 85–86, asparagine 190, and 213–215; these read AR and SGH. An N6-(pyridoxal phosphate)lysine modification is found at lysine 216.

This sequence belongs to the SepCysS family. Homodimer. Interacts with SepRS. Pyridoxal 5'-phosphate serves as cofactor.

It carries out the reaction O-phospho-L-seryl-tRNA(Cys) + hydrogen sulfide + H(+) = L-cysteinyl-tRNA(Cys) + phosphate. Functionally, converts O-phospho-L-seryl-tRNA(Cys) (Sep-tRNA(Cys)) to L-cysteinyl-tRNA(Cys) (Cys-tRNA(Cys)). The protein is O-phospho-L-seryl-tRNA:Cys-tRNA synthase 2 of Methanocorpusculum labreanum (strain ATCC 43576 / DSM 4855 / Z).